The following is a 483-amino-acid chain: Cobyric acid synthase (483 aa).

One can recognise a GATase cobBQ-type domain in the interval 248 to 435; sequence LLKVVVPVLP…LHGLFETPAA (188 aa). Cys-329 (nucleophile) is an active-site residue. The active site involves His-427.

The protein belongs to the CobB/CobQ family. CobQ subfamily.

It participates in cofactor biosynthesis; adenosylcobalamin biosynthesis. Catalyzes amidations at positions B, D, E, and G on adenosylcobyrinic A,C-diamide. NH(2) groups are provided by glutamine, and one molecule of ATP is hydrogenolyzed for each amidation. This is Cobyric acid synthase from Pseudomonas fluorescens (strain ATCC BAA-477 / NRRL B-23932 / Pf-5).